The sequence spans 396 residues: Unsaturated chondroitin disaccharide hydrolase (396 aa).

The active-site Nucleophile is aspartate 113. Substrate contacts are provided by aspartate 113, aspartate 173, glycine 231, threonine 233, arginine 245, tryptophan 249, serine 363, and serine 366. Aspartate 173 serves as the catalytic Proton donor.

Belongs to the glycosyl hydrolase 88 family. As to quaternary structure, monomer.

The enzyme catalyses beta-D-4-deoxy-Delta(4)-GlcpA-(1-&gt;3)-beta-D-GalpNAc6S + H2O = N-acetyl-beta-D-galactosamine 6-sulfate + 5-dehydro-4-deoxy-D-glucuronate. Functionally, catalyzes the hydrolysis of unsaturated hyaluronate and chondroitin disaccharides. Also degrades unsaturated heparin disaccharides. Releases 4-deoxy-4,5-didehydro D-glucuronic acid or 4-deoxy-4,5-didehydro L-iduronic acid from chondroitin disaccharides, hyaluronan disaccharides and heparin disaccharides and cleaves both glycosidic (1-&gt;3) and (1-&gt;4) bonds. Prefers sulfated glycosaminoglycans compared to unsulfated glycosaminoglycans. Probably required for mammalian cells invasion through the degradation of extracellular sulfated glycosaminoglycans such as chondroitin and hyaluronan. This is Unsaturated chondroitin disaccharide hydrolase (ugl) from Streptococcus pneumoniae (strain ATCC BAA-255 / R6).